The sequence spans 602 residues: Elongation factor 4 (602 aa).

A tr-type G domain is found at 6–188 (DHIRNFSIVA…AIVNKLPAPK (183 aa)). GTP is bound by residues 18-23 (DHGKST) and 135-138 (NKID).

Belongs to the TRAFAC class translation factor GTPase superfamily. Classic translation factor GTPase family. LepA subfamily.

Its subcellular location is the cell inner membrane. It carries out the reaction GTP + H2O = GDP + phosphate + H(+). Its function is as follows. Required for accurate and efficient protein synthesis under certain stress conditions. May act as a fidelity factor of the translation reaction, by catalyzing a one-codon backward translocation of tRNAs on improperly translocated ribosomes. Back-translocation proceeds from a post-translocation (POST) complex to a pre-translocation (PRE) complex, thus giving elongation factor G a second chance to translocate the tRNAs correctly. Binds to ribosomes in a GTP-dependent manner. The protein is Elongation factor 4 of Brucella suis (strain ATCC 23445 / NCTC 10510).